Here is a 358-residue protein sequence, read N- to C-terminus: Alanine racemase (358 aa).

Catalysis depends on Lys34, which acts as the Proton acceptor; specific for D-alanine. Lys34 is subject to N6-(pyridoxal phosphate)lysine. Arg129 provides a ligand contact to substrate. Tyr254 functions as the Proton acceptor; specific for L-alanine in the catalytic mechanism. Met302 serves as a coordination point for substrate.

The protein belongs to the alanine racemase family. It depends on pyridoxal 5'-phosphate as a cofactor.

It carries out the reaction L-alanine = D-alanine. It participates in amino-acid biosynthesis; D-alanine biosynthesis; D-alanine from L-alanine: step 1/1. Catalyzes the interconversion of L-alanine and D-alanine. May also act on other amino acids. This Aliivibrio salmonicida (strain LFI1238) (Vibrio salmonicida (strain LFI1238)) protein is Alanine racemase (alr).